A 155-amino-acid polypeptide reads, in one-letter code: Small ribosomal subunit protein uS7 (155 aa).

Belongs to the universal ribosomal protein uS7 family. In terms of assembly, part of the 30S ribosomal subunit. Contacts proteins S9 and S11.

Its function is as follows. One of the primary rRNA binding proteins, it binds directly to 16S rRNA where it nucleates assembly of the head domain of the 30S subunit. Is located at the subunit interface close to the decoding center, probably blocks exit of the E-site tRNA. This is Small ribosomal subunit protein uS7 from Chlorobium phaeobacteroides (strain BS1).